A 1562-amino-acid polypeptide reads, in one-letter code: Pikromycin polyketide synthase component PikAIII (1562 aa).

In terms of domain architecture, Ketosynthase family 3 (KS3) spans 34–464 (HEPVAIVGMA…GTNAHVVLEE (431 aa)). Positions 37-1475 (VAIVGMACRL…TPAALAAHLH (1439 aa)) are module 5. Cys-209 (acyl-thioester intermediate; for beta-ketoacyl synthase activity) is an active-site residue. Residues His-344 and His-384 each act as for beta-ketoacyl synthase activity in the active site. Positions 565 to 866 (FVFPGQGTQW…GGQERLVTSL (302 aa)) are acyltransferase. The active-site Acyl-ester intermediate; for acyltransferase activity is the Ser-655. The interval 1116–1293 (GTVLITGGTG…ATSVAWGLWA (178 aa)) is beta-ketoacyl reductase. NADP(+) contacts are provided by residues 1124–1127 (TGAL), 1147–1150 (SRSG), 1176–1177 (DV), Lys-1226, and 1248–1249 (YS). Catalysis depends on Tyr-1263, which acts as the Acyl-ester intermediate; for beta-ketoacyl reductase activity. A Carrier domain is found at 1403–1478 (PALLTLVRTH…ALAAHLHEAY (76 aa)). Ser-1438 is modified (O-(pantetheine 4'-phosphoryl)serine). The segment at 1519 to 1548 (GIEPEPGSGGSDGGAADPGAEPEASIDDLD) is disordered. The segment covering 1532–1541 (GAADPGAEPE) has biased composition (low complexity).

Homodimer. Pikromycin PKS consists of a combination of multimodular (PikAI and PikAII) and monomodular (PikAIII and PikAIV) polypeptides each coding for a functional synthase subunit which participates in 1 (monomodular) or 2 (multimodular) of the six FAS-like elongation steps required for formation of the polyketide. Module 1, 2, 3, 4, 5, and 6 participating in biosynthesis steps 1, 2, 3, 4, 5, and 6, respectively. Pantetheine 4'-phosphate is required as a cofactor.

The catalysed reaction is 5 (S)-methylmalonyl-CoA + malonyl-CoA + 5 NADPH + 11 H(+) = 10-deoxymethynolide + 6 CO2 + 5 NADP(+) + 6 CoA + 2 H2O. The enzyme catalyses 6 (S)-methylmalonyl-CoA + malonyl-CoA + 5 NADPH + 12 H(+) = narbonolide + 7 CO2 + 5 NADP(+) + 7 CoA + 2 H2O. It functions in the pathway antibiotic biosynthesis. Functionally, involved in the biosynthesis of 12- and 14-membered ring macrolactone antibiotics such as methymycin and neomethymycin, and pikromycin and narbomycin, respectively. Component of the pikromycin PKS which catalyzes the biosynthesis of both precursors 10-deoxymethynolide (12-membered ring macrolactone) and narbonolide (14-membered ring macrolactone). Chain elongation through PikAI, PikAII and PikAIII followed by thioesterase catalyzed termination results in the production of 10-deoxymethynolide, while continued elongation through PikAIV, followed by thioesterase (TE) catalyzed cyclization results in the biosynthesis of the narbonolide. The polypeptide is Pikromycin polyketide synthase component PikAIII (Streptomyces venezuelae).